Consider the following 319-residue polypeptide: HPr kinase/phosphorylase (319 aa).

Residues His-140 and Lys-161 contribute to the active site. 155–162 (GDSGVGKS) serves as a coordination point for ATP. Mg(2+) is bound at residue Ser-162. The active-site Proton acceptor; for phosphorylation activity. Proton donor; for dephosphorylation activity is the Asp-179. An important for the catalytic mechanism of both phosphorylation and dephosphorylation region spans residues 203–212 (LEIRGLGIID). A Mg(2+)-binding site is contributed by Glu-204. Residue Arg-245 is part of the active site. The important for the catalytic mechanism of dephosphorylation stretch occupies residues 266-271 (PVKVGR).

This sequence belongs to the HPrK/P family. In terms of assembly, homohexamer, arranged as bilayered trimers. Six HPr molecules bind to the hexamer at sites that overlap two of its subunits. It depends on Mg(2+) as a cofactor.

It catalyses the reaction [HPr protein]-L-serine + ATP = [HPr protein]-O-phospho-L-serine + ADP + H(+). The catalysed reaction is [HPr protein]-O-phospho-L-serine + phosphate + H(+) = [HPr protein]-L-serine + diphosphate. Kinase activity is slightly activated by fructose 1,6-bisphosphate (FBP), and inhibited by inorganic phosphate (Pi), but FBP prevents kinase inhibition by Pi. Dephosphorylation of P-Ser-HPr is slightly inhibited by FBP. Functionally, catalyzes the ATP- as well as the pyrophosphate-dependent phosphorylation of 'Ser-46' in HPr, a phosphocarrier protein of the phosphoenolpyruvate-dependent sugar phosphotransferase system (PTS). HprK/P also catalyzes the pyrophosphate-producing, inorganic phosphate-dependent dephosphorylation (phosphorolysis) of seryl-phosphorylated HPr (P-Ser-HPr). The two antagonistic activities of HprK/P are regulated by several intracellular metabolites, which change their concentration in response to the absence or presence of rapidly metabolisable carbon sources (glucose, fructose, etc.) in the growth medium. Therefore, by controlling the phosphorylation state of HPr, HPrK/P is a sensor enzyme that plays a major role in the regulation of carbon metabolism and sugar transport: it mediates carbon catabolite repression (CCR), and regulates PTS-catalyzed carbohydrate uptake and inducer exclusion. In Lacticaseibacillus casei (Lactobacillus casei), this protein is HPr kinase/phosphorylase (hprK).